The primary structure comprises 445 residues: Phosphoglucosamine mutase (445 aa).

Serine 102 (phosphoserine intermediate) is an active-site residue. The Mg(2+) site is built by serine 102, aspartate 241, aspartate 243, and aspartate 245. Residue serine 102 is modified to Phosphoserine.

The protein belongs to the phosphohexose mutase family. The cofactor is Mg(2+). In terms of processing, activated by phosphorylation.

It catalyses the reaction alpha-D-glucosamine 1-phosphate = D-glucosamine 6-phosphate. In terms of biological role, catalyzes the conversion of glucosamine-6-phosphate to glucosamine-1-phosphate. The protein is Phosphoglucosamine mutase of Serratia proteamaculans (strain 568).